We begin with the raw amino-acid sequence, 156 residues long: Small ribosomal subunit protein uS7 (156 aa).

Belongs to the universal ribosomal protein uS7 family. As to quaternary structure, part of the 30S ribosomal subunit. Contacts proteins S9 and S11.

Functionally, one of the primary rRNA binding proteins, it binds directly to 16S rRNA where it nucleates assembly of the head domain of the 30S subunit. Is located at the subunit interface close to the decoding center, probably blocks exit of the E-site tRNA. This is Small ribosomal subunit protein uS7 from Treponema pallidum (strain Nichols).